The chain runs to 248 residues: HTH-type transcriptional regulator GgaR (248 aa).

Residues 22 to 90 enclose the HTH gntR-type domain; the sequence is TPLYIKFAET…RGYGTQINNI (69 aa). The segment at residues 50–69 is a DNA-binding region (H-T-H motif); that stretch reads ERDLSQLTGVSRITVRKAMQ.

Senses ADP-glucose (ADPG), which is the substrate for glycogen elongation, as an effector. In the presence of ADPG, GgaR becomes inactive and derepresses the yegTUV operon, leading to glycogen accumulation. In contrast, in the absence of glucose, the concentration of ADPG decreases, GgaR becomes active, and glycogen accumulation is repressed. In terms of biological role, transcriptional regulator that regulates glycogen accumulation in response to the amount of glucose available to the cell. Acts as a repressor of the yegTUV operon, which may be involved in glycogen accumulation. The polypeptide is HTH-type transcriptional regulator GgaR (Escherichia coli O6:H1 (strain CFT073 / ATCC 700928 / UPEC)).